The sequence spans 180 residues: ATP-dependent protease subunit HslV (180 aa).

T6 is an active-site residue. 3 residues coordinate Na(+): G162, C165, and T168.

This sequence belongs to the peptidase T1B family. HslV subfamily. As to quaternary structure, a double ring-shaped homohexamer of HslV is capped on each side by a ring-shaped HslU homohexamer. The assembly of the HslU/HslV complex is dependent on binding of ATP.

It is found in the cytoplasm. The enzyme catalyses ATP-dependent cleavage of peptide bonds with broad specificity.. With respect to regulation, allosterically activated by HslU binding. Protease subunit of a proteasome-like degradation complex believed to be a general protein degrading machinery. The chain is ATP-dependent protease subunit HslV from Oleidesulfovibrio alaskensis (strain ATCC BAA-1058 / DSM 17464 / G20) (Desulfovibrio alaskensis).